The primary structure comprises 372 residues: tRNA-specific 2-thiouridylase MnmA (372 aa).

Residues 11–18 (GMSGGVDS) and methionine 37 contribute to the ATP site. An interaction with target base in tRNA region spans residues 97 to 99 (NPD). Cysteine 102 (nucleophile) is an active-site residue. The cysteines at positions 102 and 199 are disulfide-linked. Glycine 126 contacts ATP. The tract at residues 149–151 (KDQ) is interaction with tRNA. Cysteine 199 serves as the catalytic Cysteine persulfide intermediate. Residues 309–310 (RY) form an interaction with tRNA region.

Belongs to the MnmA/TRMU family.

Its subcellular location is the cytoplasm. The catalysed reaction is S-sulfanyl-L-cysteinyl-[protein] + uridine(34) in tRNA + AH2 + ATP = 2-thiouridine(34) in tRNA + L-cysteinyl-[protein] + A + AMP + diphosphate + H(+). In terms of biological role, catalyzes the 2-thiolation of uridine at the wobble position (U34) of tRNA, leading to the formation of s(2)U34. The sequence is that of tRNA-specific 2-thiouridylase MnmA from Staphylococcus aureus (strain USA300).